Consider the following 332-residue polypeptide: tRNA-dihydrouridine(20/20a) synthase (332 aa).

Residues 22–24 (PMM) and glutamine 75 each bind FMN. Cysteine 105 acts as the Proton donor in catalysis. FMN-binding positions include lysine 144, histidine 177, 217 to 219 (NGG), and 239 to 240 (GR).

It belongs to the Dus family. DusA subfamily. The cofactor is FMN.

The enzyme catalyses 5,6-dihydrouridine(20) in tRNA + NADP(+) = uridine(20) in tRNA + NADPH + H(+). It carries out the reaction 5,6-dihydrouridine(20) in tRNA + NAD(+) = uridine(20) in tRNA + NADH + H(+). The catalysed reaction is 5,6-dihydrouridine(20a) in tRNA + NADP(+) = uridine(20a) in tRNA + NADPH + H(+). It catalyses the reaction 5,6-dihydrouridine(20a) in tRNA + NAD(+) = uridine(20a) in tRNA + NADH + H(+). In terms of biological role, catalyzes the synthesis of 5,6-dihydrouridine (D), a modified base found in the D-loop of most tRNAs, via the reduction of the C5-C6 double bond in target uridines. Specifically modifies U20 and U20a in tRNAs. This chain is tRNA-dihydrouridine(20/20a) synthase, found in Xylella fastidiosa (strain Temecula1 / ATCC 700964).